Consider the following 323-residue polypeptide: Quinolinate synthase (323 aa).

Iminosuccinate is bound by residues histidine 38 and serine 55. Position 100 (cysteine 100) interacts with [4Fe-4S] cluster. Residues 126 to 128 (YIN) and serine 143 each bind iminosuccinate. Residue cysteine 186 participates in [4Fe-4S] cluster binding. Residues 212–214 (HPE) and threonine 229 each bind iminosuccinate. Position 279 (cysteine 279) interacts with [4Fe-4S] cluster.

This sequence belongs to the quinolinate synthase family. Type 2 subfamily. It depends on [4Fe-4S] cluster as a cofactor.

The protein localises to the cytoplasm. It carries out the reaction iminosuccinate + dihydroxyacetone phosphate = quinolinate + phosphate + 2 H2O + H(+). It participates in cofactor biosynthesis; NAD(+) biosynthesis; quinolinate from iminoaspartate: step 1/1. In terms of biological role, catalyzes the condensation of iminoaspartate with dihydroxyacetone phosphate to form quinolinate. The chain is Quinolinate synthase from Gloeothece citriformis (strain PCC 7424) (Cyanothece sp. (strain PCC 7424)).